The primary structure comprises 158 residues: 2-C-methyl-D-erythritol 2,4-cyclodiphosphate synthase (158 aa).

Positions 8 and 10 each coordinate a divalent metal cation. 4-CDP-2-C-methyl-D-erythritol 2-phosphate contacts are provided by residues 8 to 10 (DVH) and 34 to 35 (HS). His-42 contributes to the a divalent metal cation binding site. Residues 56 to 58 (DIG), 61 to 65 (FPDTD), 100 to 106 (AQKPKML), 132 to 135 (TTEE), and Phe-139 contribute to the 4-CDP-2-C-methyl-D-erythritol 2-phosphate site.

This sequence belongs to the IspF family. In terms of assembly, homotrimer. The cofactor is a divalent metal cation.

The catalysed reaction is 4-CDP-2-C-methyl-D-erythritol 2-phosphate = 2-C-methyl-D-erythritol 2,4-cyclic diphosphate + CMP. It functions in the pathway isoprenoid biosynthesis; isopentenyl diphosphate biosynthesis via DXP pathway; isopentenyl diphosphate from 1-deoxy-D-xylulose 5-phosphate: step 4/6. Functionally, involved in the biosynthesis of isopentenyl diphosphate (IPP) and dimethylallyl diphosphate (DMAPP), two major building blocks of isoprenoid compounds. Catalyzes the conversion of 4-diphosphocytidyl-2-C-methyl-D-erythritol 2-phosphate (CDP-ME2P) to 2-C-methyl-D-erythritol 2,4-cyclodiphosphate (ME-CPP) with a corresponding release of cytidine 5-monophosphate (CMP). This Clostridium beijerinckii (strain ATCC 51743 / NCIMB 8052) (Clostridium acetobutylicum) protein is 2-C-methyl-D-erythritol 2,4-cyclodiphosphate synthase.